A 213-amino-acid polypeptide reads, in one-letter code: Phosphatidylserine decarboxylase proenzyme (213 aa).

Ser-183 acts as the Schiff-base intermediate with substrate; via pyruvic acid in catalysis. Ser-183 bears the Pyruvic acid (Ser); by autocatalysis mark.

This sequence belongs to the phosphatidylserine decarboxylase family. PSD-A subfamily. As to quaternary structure, heterodimer of a large membrane-associated beta subunit and a small pyruvoyl-containing alpha subunit. Requires pyruvate as cofactor. In terms of processing, is synthesized initially as an inactive proenzyme. Formation of the active enzyme involves a self-maturation process in which the active site pyruvoyl group is generated from an internal serine residue via an autocatalytic post-translational modification. Two non-identical subunits are generated from the proenzyme in this reaction, and the pyruvate is formed at the N-terminus of the alpha chain, which is derived from the carboxyl end of the proenzyme. The post-translation cleavage follows an unusual pathway, termed non-hydrolytic serinolysis, in which the side chain hydroxyl group of the serine supplies its oxygen atom to form the C-terminus of the beta chain, while the remainder of the serine residue undergoes an oxidative deamination to produce ammonia and the pyruvoyl prosthetic group on the alpha chain.

It localises to the cell membrane. The catalysed reaction is a 1,2-diacyl-sn-glycero-3-phospho-L-serine + H(+) = a 1,2-diacyl-sn-glycero-3-phosphoethanolamine + CO2. Its pathway is phospholipid metabolism; phosphatidylethanolamine biosynthesis; phosphatidylethanolamine from CDP-diacylglycerol: step 2/2. Functionally, catalyzes the formation of phosphatidylethanolamine (PtdEtn) from phosphatidylserine (PtdSer). The chain is Phosphatidylserine decarboxylase proenzyme from Syntrophus aciditrophicus (strain SB).